A 235-amino-acid polypeptide reads, in one-letter code: tRNA (adenine(37)-N6)-methyltransferase (235 aa).

The TsaA-like domain occupies 6 to 147 (FEQIGVIRSP…YLPFAESLPD (142 aa)). S-adenosyl-L-methionine-binding positions include 23–25 (PRQ), 64–65 (HQ), arginine 92, and 127–130 (VDGT).

The protein belongs to the tRNA methyltransferase O family. As to quaternary structure, homodimer.

It carries out the reaction N(6)-L-threonylcarbamoyladenosine(37) in tRNA + S-adenosyl-L-methionine = N(6)-methyl,N(6)-L-threonylcarbamoyladenosine(37) in tRNA + S-adenosyl-L-homocysteine + H(+). In terms of biological role, S-adenosyl-L-methionine-dependent methyltransferase responsible for the addition of the methyl group in the formation of N6-methyl-N6-threonylcarbamoyladenosine at position 37 (m(6)t(6)A37) of the tRNA anticodon loop of tRNA(Thr)(GGU) that read codons starting with adenosine. The methyl group of m(6)t(6)A37 appears to slightly improve the efficiency of the tRNA decoding ability. The chain is tRNA (adenine(37)-N6)-methyltransferase from Escherichia coli (strain K12).